The following is a 315-amino-acid chain: L-lactate dehydrogenase (315 aa).

NAD(+) is bound by residues Val-16, Asp-37, and 81–82 (GA). Substrate is bound by residues Gln-84, Arg-90, and 122-125 (NPVD). NAD(+) is bound by residues 120–122 (VSN) and Ser-145. Position 150-153 (150-153 (DTAR)) interacts with substrate. Beta-D-fructose 1,6-bisphosphate is bound by residues Arg-155 and His-170. The Proton acceptor role is filled by His-177. At Tyr-224 the chain carries Phosphotyrosine. Thr-233 serves as a coordination point for substrate.

This sequence belongs to the LDH/MDH superfamily. LDH family. Homotetramer.

The protein resides in the cytoplasm. It catalyses the reaction (S)-lactate + NAD(+) = pyruvate + NADH + H(+). It functions in the pathway fermentation; pyruvate fermentation to lactate; (S)-lactate from pyruvate: step 1/1. Allosterically activated by fructose 1,6-bisphosphate (FBP). Functionally, catalyzes the conversion of lactate to pyruvate. The sequence is that of L-lactate dehydrogenase from Treponema denticola (strain ATCC 35405 / DSM 14222 / CIP 103919 / JCM 8153 / KCTC 15104).